The chain runs to 267 residues: Lectin SfL-1 (267 aa).

A run of 4 repeats spans residues 1 to 67 (GRYT…RRGD), 68 to 135 (SNNY…QSGG), 136 to 202 (DSYN…STGG), and 203 to 267 (SNYK…GTAI). The 4 X approximate tandem repeats stretch occupies residues 1 to 267 (GRYTVQNQWG…GPIGFKGTAI (267 aa)).

In terms of assembly, monomer.

Functionally, lectin specific for high mannose N-glycans, recognizes the branched moiety of these glycans. Does not recognize other types of N-glycans or monosaccharides. This chain is Lectin SfL-1, found in Solieria filiformis (Red alga).